We begin with the raw amino-acid sequence, 111 residues long: Iron-sulfur cluster assembly protein CyaY (111 aa).

This sequence belongs to the frataxin family.

Involved in iron-sulfur (Fe-S) cluster assembly. May act as a regulator of Fe-S biogenesis. The polypeptide is Iron-sulfur cluster assembly protein CyaY (Cupriavidus pinatubonensis (strain JMP 134 / LMG 1197) (Cupriavidus necator (strain JMP 134))).